A 245-amino-acid chain; its full sequence is Probable 2-phosphosulfolactate phosphatase (245 aa).

The protein belongs to the ComB family. Mg(2+) serves as cofactor.

The enzyme catalyses (2R)-O-phospho-3-sulfolactate + H2O = (2R)-3-sulfolactate + phosphate. The chain is Probable 2-phosphosulfolactate phosphatase from Nostoc sp. (strain PCC 7120 / SAG 25.82 / UTEX 2576).